A 250-amino-acid chain; its full sequence is Probable replication-associated protein repA2 (250 aa).

This sequence belongs to the IncFII RepA family.

Functionally, this protein is essential for plasmid replication; it is involved in copy control functions. The protein is Probable replication-associated protein repA2 (repA2) of Buchnera aphidicola subsp. Schizaphis graminum (strain Sg).